We begin with the raw amino-acid sequence, 217 residues long: MOB kinase activator 3A (217 aa).

Residues Cys-83, Cys-88, His-165, and His-170 each contribute to the Zn(2+) site.

This sequence belongs to the MOB1/phocein family.

May regulate the activity of kinases. In Bos taurus (Bovine), this protein is MOB kinase activator 3A (MOB3A).